The sequence spans 213 residues: Cytidylate kinase (213 aa).

Gly9–Thr17 provides a ligand contact to ATP.

This sequence belongs to the cytidylate kinase family. Type 1 subfamily.

It is found in the cytoplasm. The enzyme catalyses CMP + ATP = CDP + ADP. It carries out the reaction dCMP + ATP = dCDP + ADP. This Caulobacter vibrioides (strain ATCC 19089 / CIP 103742 / CB 15) (Caulobacter crescentus) protein is Cytidylate kinase.